A 318-amino-acid polypeptide reads, in one-letter code: Pheromone-regulated membrane protein 5 (318 aa).

The chain crosses the membrane as a helical span at residues Gly75–Ile98. Ser129 bears the Phosphoserine mark. A compositionally biased stretch (low complexity) spans Thr238–Leu247. Residues Thr238–Glu318 form a disordered region. The span at Gly250–Lys261 shows a compositional bias: basic and acidic residues. Positions Ser276–Arg285 are enriched in polar residues. Ser279, Ser282, and Ser288 each carry phosphoserine. The segment covering His309–Glu318 has biased composition (basic and acidic residues). A Glycyl lysine isopeptide (Lys-Gly) (interchain with G-Cter in ubiquitin) cross-link involves residue Lys314.

The protein belongs to the PRM5 family.

Its subcellular location is the membrane. The protein is Pheromone-regulated membrane protein 5 (PRM5) of Saccharomyces cerevisiae (strain ATCC 204508 / S288c) (Baker's yeast).